The following is a 231-amino-acid chain: Cytochrome c oxidase subunit 2 (231 aa).

The Mitochondrial intermembrane portion of the chain corresponds to 1–14 (MAHPAQLGLQNATS). A helical transmembrane segment spans residues 15–45 (PIMEELIAFHDHALMIIFLISSLVLYVISLM). Topologically, residues 46–59 (LTTKLTHTSTMNAQ) are mitochondrial matrix. The helical transmembrane segment at 60–87 (EIEMIWTILPAIILIMIALPSLRILYMT) threads the bilayer. Topologically, residues 88–231 (DEFNKPYLTL…WASYLYIVSL (144 aa)) are mitochondrial intermembrane. 6 residues coordinate Cu cation: His161, Cys196, Glu198, Cys200, His204, and Met207. Glu198 contributes to the Mg(2+) binding site.

This sequence belongs to the cytochrome c oxidase subunit 2 family. As to quaternary structure, component of the cytochrome c oxidase (complex IV, CIV), a multisubunit enzyme composed of 14 subunits. The complex is composed of a catalytic core of 3 subunits MT-CO1, MT-CO2 and MT-CO3, encoded in the mitochondrial DNA, and 11 supernumerary subunits COX4I, COX5A, COX5B, COX6A, COX6B, COX6C, COX7A, COX7B, COX7C, COX8 and NDUFA4, which are encoded in the nuclear genome. The complex exists as a monomer or a dimer and forms supercomplexes (SCs) in the inner mitochondrial membrane with NADH-ubiquinone oxidoreductase (complex I, CI) and ubiquinol-cytochrome c oxidoreductase (cytochrome b-c1 complex, complex III, CIII), resulting in different assemblies (supercomplex SCI(1)III(2)IV(1) and megacomplex MCI(2)III(2)IV(2)). Found in a complex with TMEM177, COA6, COX18, COX20, SCO1 and SCO2. Interacts with TMEM177 in a COX20-dependent manner. Interacts with COX20. Interacts with COX16. Cu cation serves as cofactor.

The protein localises to the mitochondrion inner membrane. It catalyses the reaction 4 Fe(II)-[cytochrome c] + O2 + 8 H(+)(in) = 4 Fe(III)-[cytochrome c] + 2 H2O + 4 H(+)(out). In terms of biological role, component of the cytochrome c oxidase, the last enzyme in the mitochondrial electron transport chain which drives oxidative phosphorylation. The respiratory chain contains 3 multisubunit complexes succinate dehydrogenase (complex II, CII), ubiquinol-cytochrome c oxidoreductase (cytochrome b-c1 complex, complex III, CIII) and cytochrome c oxidase (complex IV, CIV), that cooperate to transfer electrons derived from NADH and succinate to molecular oxygen, creating an electrochemical gradient over the inner membrane that drives transmembrane transport and the ATP synthase. Cytochrome c oxidase is the component of the respiratory chain that catalyzes the reduction of oxygen to water. Electrons originating from reduced cytochrome c in the intermembrane space (IMS) are transferred via the dinuclear copper A center (CU(A)) of subunit 2 and heme A of subunit 1 to the active site in subunit 1, a binuclear center (BNC) formed by heme A3 and copper B (CU(B)). The BNC reduces molecular oxygen to 2 water molecules using 4 electrons from cytochrome c in the IMS and 4 protons from the mitochondrial matrix. The chain is Cytochrome c oxidase subunit 2 (MT-CO2) from Alouatta palliata (Mantled howler monkey).